We begin with the raw amino-acid sequence, 162 residues long: MRRAVCPGSFDPITNGHLDIIVRASKLFDEVVVAVLINKSKAHLFTIEERIDLIRDAVRSHPDAPTNVVVDSSHGLLVDFCRVRGIQSIVKGLRAVSDFDYELQMAQMNHSLAGVETLFMSTNPQYAFLSSSLVKEVARYGGDVSGLVPDVVLKGLRDRSAP.

Residue Ser-9 coordinates substrate. Residues 9–10 (SF) and His-17 each bind ATP. Residues Lys-41, Leu-77, and Lys-91 each coordinate substrate. ATP is bound by residues 92-94 (GLR), Glu-102, and 126-132 (YAFLSSS).

This sequence belongs to the bacterial CoaD family. Homohexamer. The cofactor is Mg(2+).

It is found in the cytoplasm. The catalysed reaction is (R)-4'-phosphopantetheine + ATP + H(+) = 3'-dephospho-CoA + diphosphate. Its pathway is cofactor biosynthesis; coenzyme A biosynthesis; CoA from (R)-pantothenate: step 4/5. Its function is as follows. Reversibly transfers an adenylyl group from ATP to 4'-phosphopantetheine, yielding dephospho-CoA (dPCoA) and pyrophosphate. This is Phosphopantetheine adenylyltransferase from Parafrankia sp. (strain EAN1pec).